The following is a 334-amino-acid chain: L-lactate dehydrogenase B chain (334 aa).

The residue at position 2 (A2) is an N-acetylalanine. An N6-acetyllysine modification is found at K7. Q31–D53 contributes to the NAD(+) binding site. S44 bears the Phosphoserine mark. Residue K58 is modified to N6-acetyllysine. R100 contributes to the NAD(+) binding site. Residue R107 participates in substrate binding. K119 bears the N6-acetyllysine mark. Residue N139 participates in NAD(+) binding. Substrate contacts are provided by N139 and R170. The active-site Proton acceptor is the H194. Y240 carries the post-translational modification Phosphotyrosine. A substrate-binding site is contributed by T249. N6-acetyllysine is present on K329.

The protein belongs to the LDH/MDH superfamily. LDH family. In terms of assembly, homotetramer. Interacts with PTEN upstream reading frame protein MP31; the interaction leads to inhibition of mitochondrial lactate dehydrogenase activity, preventing conversion of lactate to pyruvate in mitochondria. As to expression, predominantly expressed in aerobic tissues such as cardiac muscle.

The protein localises to the cytoplasm. Its subcellular location is the mitochondrion inner membrane. It catalyses the reaction (S)-lactate + NAD(+) = pyruvate + NADH + H(+). The protein operates within fermentation; pyruvate fermentation to lactate; (S)-lactate from pyruvate: step 1/1. Interconverts simultaneously and stereospecifically pyruvate and lactate with concomitant interconversion of NADH and NAD(+). The sequence is that of L-lactate dehydrogenase B chain (LDHB) from Homo sapiens (Human).